A 724-amino-acid chain; its full sequence is Degenerin mec-10 (724 aa).

Topologically, residues 1-125 (MNRGPPNPRM…GQAPNSLYRA (125 aa)) are cytoplasmic. Residues 126–146 (VWVFLLLICAIQFINQAVAVI) traverse the membrane as a helical segment. Residues 147–684 (QKYQKMDKIT…FGGHLGLWSG (538 aa)) are Extracellular-facing. 5 N-linked (GlcNAc...) asparagine glycosylation sites follow: Asn-294, Asn-370, Asn-463, Asn-605, and Asn-624. The chain crosses the membrane as a helical span at residues 685–705 (VSVMTCCEFVCLVLELLYMAV). Topologically, residues 706 to 724 (THHITQERIRRRENAANEF) are cytoplasmic.

Belongs to the amiloride-sensitive sodium channel (TC 1.A.6) family. The channel is probably composed of at least the mec-2, mec-4, mec-6 and mec-10 subunits.

The protein resides in the cell membrane. Its function is as follows. Amiloride-sensitive sodium channel subunit required for mechanosensory transduction (touch sensitivity). Negatively regulates the turning step of male mating behavior. This chain is Degenerin mec-10, found in Caenorhabditis briggsae.